The primary structure comprises 135 residues: Small ribosomal subunit protein uS12 (135 aa).

Asp89 carries the post-translational modification 3-methylthioaspartic acid. A disordered region spans residues 106–135; it reads GVANRRQSRSKYGAKRPKAGAAQATKGGKK. Positions 111–123 are enriched in basic residues; the sequence is RQSRSKYGAKRPK. Residues 124 to 135 are compositionally biased toward low complexity; that stretch reads AGAAQATKGGKK.

Belongs to the universal ribosomal protein uS12 family. Part of the 30S ribosomal subunit. Contacts proteins S8 and S17. May interact with IF1 in the 30S initiation complex.

In terms of biological role, with S4 and S5 plays an important role in translational accuracy. Functionally, interacts with and stabilizes bases of the 16S rRNA that are involved in tRNA selection in the A site and with the mRNA backbone. Located at the interface of the 30S and 50S subunits, it traverses the body of the 30S subunit contacting proteins on the other side and probably holding the rRNA structure together. The combined cluster of proteins S8, S12 and S17 appears to hold together the shoulder and platform of the 30S subunit. The sequence is that of Small ribosomal subunit protein uS12 from Hydrogenobaculum sp. (strain Y04AAS1).